A 441-amino-acid chain; its full sequence is Deoxyguanosinetriphosphate triphosphohydrolase-like protein (441 aa).

The 192-residue stretch at 59–250 folds into the HD domain; it reads RLTHSLEVSQ…MELADDTAYA (192 aa).

It belongs to the dGTPase family. Type 2 subfamily.

In Shewanella loihica (strain ATCC BAA-1088 / PV-4), this protein is Deoxyguanosinetriphosphate triphosphohydrolase-like protein.